We begin with the raw amino-acid sequence, 399 residues long: Coenzyme A biosynthesis bifunctional protein CoaBC (399 aa).

Positions 1–190 are phosphopantothenoylcysteine decarboxylase; the sequence is MQSLAGKKIL…FAPKILVGKR (190 aa). Cys-159 acts as the Proton donor in catalysis. The segment at 191–399 is phosphopantothenate--cysteine ligase; sequence VLITAGPTRE…AVMHLIHEQM (209 aa). Residues Asp-279, Lys-289, 307-310, Phe-326, Lys-340, and Lys-344 each bind CTP; that span reads PDIV.

This sequence in the N-terminal section; belongs to the HFCD (homo-oligomeric flavin containing Cys decarboxylase) superfamily. It in the C-terminal section; belongs to the PPC synthetase family. Mg(2+) serves as cofactor. The cofactor is FMN.

The catalysed reaction is N-[(R)-4-phosphopantothenoyl]-L-cysteine + H(+) = (R)-4'-phosphopantetheine + CO2. The enzyme catalyses (R)-4'-phosphopantothenate + L-cysteine + CTP = N-[(R)-4-phosphopantothenoyl]-L-cysteine + CMP + diphosphate + H(+). The protein operates within cofactor biosynthesis; coenzyme A biosynthesis; CoA from (R)-pantothenate: step 2/5. Its pathway is cofactor biosynthesis; coenzyme A biosynthesis; CoA from (R)-pantothenate: step 3/5. Its function is as follows. Catalyzes two sequential steps in the biosynthesis of coenzyme A. In the first step cysteine is conjugated to 4'-phosphopantothenate to form 4-phosphopantothenoylcysteine. In the second step the latter compound is decarboxylated to form 4'-phosphopantotheine. The sequence is that of Coenzyme A biosynthesis bifunctional protein CoaBC from Vibrio cholerae serotype O1 (strain ATCC 39315 / El Tor Inaba N16961).